Consider the following 292-residue polypeptide: Techylectin-5A (292 aa).

Positions 1-23 are cleaved as a signal peptide; sequence MHNLRNILFVITLIGQKYGLTSS. The residue at position 24 (Gln-24) is a Pyrrolidone carboxylic acid. One can recognise a Fibrinogen C-terminal domain in the interval 63-286; the sequence is PIVSPDPTDC…QVEMKIRPVE (224 aa). Cys-72 and Cys-103 are oxidised to a cystine. Asn-173, Asn-198, and Asn-214 each carry an N-linked (GlcNAc...) asparagine glycan. Ca(2+)-binding residues include Asp-221, His-225, and Thr-227. Cys-229 and Cys-242 form a disulfide bridge.

As to quaternary structure, multimeric. PubMed:10468566 and PubMed:11707569 are in disagreement about the nature of the multimer, PubMed:10468566 finds hexamers and octamers, the results in PubMed:11707569 suggest tetramers. As to expression, strongly expressed in heart and intestine, weakly expressed in hepatopancreas. Not found in hemocytes, stomach, nervous tissue or skeletal muscle.

The protein localises to the secreted. Functionally, lectin involved in innate immunity. Agglutinates all types of human erythrocytes, Gram-positive and Gram-negative bacteria. Has a stronger agglutinating activity towards Gram-negative bacteria than towards Gram-positive bacteria. Specifically recognizes acetyl group-containing substances on agglutinated cells. The hemagglutinating activity was inhibited by EDTA, acetyl group-containing mono- and disaccharides, N-acetyl derivatives of amino acids, other acetyl group-containing substances, propionamide and benzamide. Enhances the antimicrobial activity of big defensin against Gram-positive bacteria but not against Gram-negative bacteria. This chain is Techylectin-5A, found in Tachypleus tridentatus (Japanese horseshoe crab).